The sequence spans 487 residues: Serine/threonine-protein kinase BSK8 (487 aa).

Residue Gly2 is the site of N-myristoyl glycine attachment. Phosphoserine is present on Ser20. The region spanning 59 to 325 is the Protein kinase domain; the sequence is ENIVSEHGER…DLEIASHQLL (267 aa). ATP is bound by residues 65–73, Asn71, Lys87, and 133–135; these read HGERAPNVV and EFM. Asp181 (proton acceptor) is an active-site residue. ATP-binding positions include 185–186 and Asn205; that span reads YR. Ser213 bears the Phosphoserine mark.

This sequence belongs to the protein kinase superfamily. Ser/Thr protein kinase family. In terms of assembly, interacts with ASK7/BIN2, BSK1, BSK5, BSK6 and BSK11. Interacts with BSL2. In terms of processing, phosphorylated by BRI1, ASK7/BIN2 and ASK9/BIL2.

The protein localises to the cell membrane. The enzyme catalyses L-seryl-[protein] + ATP = O-phospho-L-seryl-[protein] + ADP + H(+). It carries out the reaction L-threonyl-[protein] + ATP = O-phospho-L-threonyl-[protein] + ADP + H(+). Probable serine/threonine kinase that acts as a positive regulator of brassinosteroid (BR) signaling downstream of the receptor kinase BRI1. Functions redundantly with BSK3, BSK4, BSK6 and BSK7. Involved in the regulation of sucrose-phosphate synthase 1 (SPS1) in the context of sucrose resuply after starvation. Activates BSL2, a phosphatase that may dephosphorylate SPS1, leading to the activation of SPS1. The chain is Serine/threonine-protein kinase BSK8 from Arabidopsis thaliana (Mouse-ear cress).